We begin with the raw amino-acid sequence, 141 residues long: S-adenosylmethionine decarboxylase proenzyme (141 aa).

S63 (schiff-base intermediate with substrate; via pyruvic acid) is an active-site residue. The residue at position 63 (S63) is a Pyruvic acid (Ser); by autocatalysis. H68 acts as the Proton acceptor; for processing activity in catalysis. The active-site Proton donor; for catalytic activity is the C83.

It belongs to the prokaryotic AdoMetDC family. Type 1 subfamily. Heterotetramer of two alpha and two beta chains arranged as a dimer of alpha/beta heterodimers. Pyruvate serves as cofactor. In terms of processing, is synthesized initially as an inactive proenzyme. Formation of the active enzyme involves a self-maturation process in which the active site pyruvoyl group is generated from an internal serine residue via an autocatalytic post-translational modification. Two non-identical subunits are generated from the proenzyme in this reaction, and the pyruvate is formed at the N-terminus of the alpha chain, which is derived from the carboxyl end of the proenzyme. The post-translation cleavage follows an unusual pathway, termed non-hydrolytic serinolysis, in which the side chain hydroxyl group of the serine supplies its oxygen atom to form the C-terminus of the beta chain, while the remainder of the serine residue undergoes an oxidative deamination to produce ammonia and the pyruvoyl group blocking the N-terminus of the alpha chain.

The catalysed reaction is S-adenosyl-L-methionine + H(+) = S-adenosyl 3-(methylsulfanyl)propylamine + CO2. It participates in amine and polyamine biosynthesis; S-adenosylmethioninamine biosynthesis; S-adenosylmethioninamine from S-adenosyl-L-methionine: step 1/1. In terms of biological role, catalyzes the decarboxylation of S-adenosylmethionine to S-adenosylmethioninamine (dcAdoMet), the propylamine donor required for the synthesis of the polyamines spermine and spermidine from the diamine putrescine. The sequence is that of S-adenosylmethionine decarboxylase proenzyme from Thermococcus onnurineus (strain NA1).